The sequence spans 170 residues: NADH-ubiquinone oxidoreductase chain 2 (170 aa).

Helical transmembrane passes span 24 to 44 (LLWM…IMMF), 67 to 87 (FLIF…GFLP), 101 to 121 (LFIL…YLRL), and 150 to 170 (LILN…YMIL).

The protein belongs to the complex I subunit 2 family.

It localises to the mitochondrion inner membrane. The enzyme catalyses a ubiquinone + NADH + 5 H(+)(in) = a ubiquinol + NAD(+) + 4 H(+)(out). Functionally, core subunit of the mitochondrial membrane respiratory chain NADH dehydrogenase (Complex I) that is believed to belong to the minimal assembly required for catalysis. Complex I functions in the transfer of electrons from NADH to the respiratory chain. The immediate electron acceptor for the enzyme is believed to be ubiquinone. The chain is NADH-ubiquinone oxidoreductase chain 2 (ND2) from Anopheles albimanus (New world malaria mosquito).